The following is a 389-amino-acid chain: 26S proteasome regulatory subunit 10B (389 aa).

At Lys-72 the chain carries N6-acetyllysine. 174 to 181 (GPPGTGKT) contributes to the ATP binding site. Lys-206 carries the N6-acetyllysine modification. Position 244 is a phosphoserine (Ser-244).

The protein belongs to the AAA ATPase family. In terms of assembly, component of the 19S proteasome regulatory particle complex. The 26S proteasome consists of a 20S core particle (CP) and two 19S regulatory subunits (RP). The regulatory particle is made of a lid composed of 9 subunits, a base containing 6 ATPases including PSMC6 and few additional components. Interacts with PAAF1.

It localises to the cytoplasm. Its subcellular location is the nucleus. Functionally, component of the 26S proteasome, a multiprotein complex involved in the ATP-dependent degradation of ubiquitinated proteins. This complex plays a key role in the maintenance of protein homeostasis by removing misfolded or damaged proteins, which could impair cellular functions, and by removing proteins whose functions are no longer required. Therefore, the proteasome participates in numerous cellular processes, including cell cycle progression, apoptosis, or DNA damage repair. PSMC6 belongs to the heterohexameric ring of AAA (ATPases associated with diverse cellular activities) proteins that unfolds ubiquitinated target proteins that are concurrently translocated into a proteolytic chamber and degraded into peptides. This is 26S proteasome regulatory subunit 10B (PSMC6) from Homo sapiens (Human).